A 290-amino-acid chain; its full sequence is Agmatinase (290 aa).

His-112, Asp-135, His-137, Asp-139, Asp-216, and Asp-218 together coordinate Mn(2+).

It belongs to the arginase family. Agmatinase subfamily. It depends on Mn(2+) as a cofactor.

The catalysed reaction is agmatine + H2O = urea + putrescine. It participates in amine and polyamine biosynthesis; putrescine biosynthesis via agmatine pathway; putrescine from agmatine: step 1/1. Catalyzes the formation of putrescine from agmatine. The polypeptide is Agmatinase (speB) (Bacillus subtilis (strain 168)).